A 92-amino-acid polypeptide reads, in one-letter code: Small ribosomal subunit protein bS20 (92 aa).

2 disordered regions span residues 1 to 25 (MALRHKSAQKRHRQSLKRRAINRAK) and 68 to 92 (HKNAAARKKSRLAKAINKAKAAQQA). Residues 80-92 (AKAINKAKAAQQA) show a composition bias toward low complexity.

It belongs to the bacterial ribosomal protein bS20 family.

Binds directly to 16S ribosomal RNA. In Deinococcus radiodurans (strain ATCC 13939 / DSM 20539 / JCM 16871 / CCUG 27074 / LMG 4051 / NBRC 15346 / NCIMB 9279 / VKM B-1422 / R1), this protein is Small ribosomal subunit protein bS20.